The following is a 155-amino-acid chain: Small ribosomal subunit protein uS7c (155 aa).

The protein belongs to the universal ribosomal protein uS7 family. Part of the 30S ribosomal subunit.

The protein resides in the plastid. It is found in the chloroplast. In terms of biological role, one of the primary rRNA binding proteins, it binds directly to 16S rRNA where it nucleates assembly of the head domain of the 30S subunit. The polypeptide is Small ribosomal subunit protein uS7c (rps7) (Cabomba caroliniana (Carolina fanwort)).